A 64-amino-acid chain; its full sequence is Gallinacin-2 (64 aa).

Positions 1–22 (MRILYLLFSLLFLALQVSPGLS) are cleaved as a signal peptide. Positions 23–28 (SPRRDM) are excised as a propeptide. 3 disulfides stabilise this stretch: cysteine 31-cysteine 57, cysteine 36-cysteine 51, and cysteine 41-cysteine 58.

In terms of tissue distribution, expressed in circulating heterophil granulocytes and bone marrow (at protein level). Strong expression in the bone marrow, lung and testis. Moderate expression in the bursa and intestine. Low expression in the cloaca, gall bladder, brain, pancreas, trachea, air sacs and spleen. Expressed in the vagina, ovarian stroma and the theca layer of the ovarian follicle, but not in the granulosa layer of the ovarian follicle.

It is found in the secreted. It localises to the cytoplasmic granule. Functionally, potent antibacterial activity against the Gram-negative bacterium E.coli ML-35, and against the Gram-positive bacterium L.monocytogenes EGD. Lacks antifungal activity against C.albicans. This is Gallinacin-2 (GAL2) from Gallus gallus (Chicken).